Here is a 94-residue protein sequence, read N- to C-terminus: Small ribosomal subunit protein uS19 (94 aa).

The segment at 73 to 94 (EFSPTRRFGGHADKKSKKGQVK) is disordered.

It belongs to the universal ribosomal protein uS19 family.

Functionally, protein S19 forms a complex with S13 that binds strongly to the 16S ribosomal RNA. The polypeptide is Small ribosomal subunit protein uS19 (Kosmotoga olearia (strain ATCC BAA-1733 / DSM 21960 / TBF 19.5.1)).